Here is a 262-residue protein sequence, read N- to C-terminus: Putative 1-acyl-sn-glycerol-3-phosphate acyltransferase acl-1 (262 aa).

3 helical membrane-spanning segments follow: residues 3–23 (FLAI…PVIG), 29–49 (VYFG…SIPF), and 89–109 (IIIA…AWPV). The HXXXXD motif motif lies at 94 to 99 (HQSALD).

The protein belongs to the 1-acyl-sn-glycerol-3-phosphate acyltransferase family.

Its subcellular location is the membrane. It catalyses the reaction a 1-acyl-sn-glycero-3-phosphate + an acyl-CoA = a 1,2-diacyl-sn-glycero-3-phosphate + CoA. It participates in phospholipid metabolism; CDP-diacylglycerol biosynthesis; CDP-diacylglycerol from sn-glycerol 3-phosphate: step 2/3. Its function is as follows. Converts lysophosphatidic acid (LPA) into phosphatidic acid by incorporating an acyl moiety at the sn-2 position of the glycerol backbone. In Caenorhabditis elegans, this protein is Putative 1-acyl-sn-glycerol-3-phosphate acyltransferase acl-1 (acl-1).